A 409-amino-acid chain; its full sequence is LL-diaminopimelate aminotransferase (409 aa).

Residues tyrosine 15 and glycine 42 each contribute to the substrate site. Residues tyrosine 72, 108 to 109, tyrosine 132, asparagine 187, tyrosine 218, and 246 to 248 contribute to the pyridoxal 5'-phosphate site; these read SK and SFS. Lysine 109, tyrosine 132, and asparagine 187 together coordinate substrate. Residue lysine 249 is modified to N6-(pyridoxal phosphate)lysine. Positions 257 and 292 each coordinate pyridoxal 5'-phosphate. 2 residues coordinate substrate: asparagine 292 and arginine 388.

This sequence belongs to the class-I pyridoxal-phosphate-dependent aminotransferase family. LL-diaminopimelate aminotransferase subfamily. Homodimer. It depends on pyridoxal 5'-phosphate as a cofactor.

It catalyses the reaction (2S,6S)-2,6-diaminopimelate + 2-oxoglutarate = (S)-2,3,4,5-tetrahydrodipicolinate + L-glutamate + H2O + H(+). Its pathway is amino-acid biosynthesis; L-lysine biosynthesis via DAP pathway; LL-2,6-diaminopimelate from (S)-tetrahydrodipicolinate (aminotransferase route): step 1/1. Functionally, involved in the synthesis of meso-diaminopimelate (m-DAP or DL-DAP), required for both lysine and peptidoglycan biosynthesis. Catalyzes the direct conversion of tetrahydrodipicolinate to LL-diaminopimelate. This is LL-diaminopimelate aminotransferase from Acaryochloris marina (strain MBIC 11017).